An 881-amino-acid polypeptide reads, in one-letter code: Valine--tRNA ligase (881 aa).

Positions 49–59 (PNVTGKLHLGH) match the 'HIGH' region motif. The 'KMSKS' region motif lies at 526-530 (KMSKS). Lys-529 is an ATP binding site. The stretch at 810–881 (LADLINLDEE…VRQRLADLEK (72 aa)) forms a coiled coil.

This sequence belongs to the class-I aminoacyl-tRNA synthetase family. ValS type 1 subfamily. In terms of assembly, monomer.

The protein resides in the cytoplasm. The enzyme catalyses tRNA(Val) + L-valine + ATP = L-valyl-tRNA(Val) + AMP + diphosphate. Its function is as follows. Catalyzes the attachment of valine to tRNA(Val). As ValRS can inadvertently accommodate and process structurally similar amino acids such as threonine, to avoid such errors, it has a 'posttransfer' editing activity that hydrolyzes mischarged Thr-tRNA(Val) in a tRNA-dependent manner. The sequence is that of Valine--tRNA ligase from Bacillus anthracis.